The primary structure comprises 514 residues: Antiseptic resistance protein (514 aa).

Residues 1–23 (MISFFTKTTDMMTSKKRWTALVV) are Cytoplasmic-facing. The chain crosses the membrane as a helical span at residues 24–41 (LAVSLFVVTMDMTILIMA). Residues 42-57 (LPELVRELEPSGTQQL) lie on the Extracellular side of the membrane. A helical membrane pass occupies residues 58–75 (WIVDIYSLVLAGFIIPLS). Over 76–86 (AFADKWGRKKA) the chain is Cytoplasmic. A helical membrane pass occupies residues 87-104 (LLTGFALFGLVSLAIFFA). Residues 105–112 (ESAEFVIA) are Extracellular-facing. Residues 113 to 130 (IRFLLGIAGALIMPTTLS) form a helical membrane-spanning segment. The Cytoplasmic portion of the chain corresponds to 131–146 (MIRVIFENPKERATAL). A helical transmembrane segment spans residues 147-164 (AVWSIASSIGAVFGPIIG). The Extracellular segment spans residues 165 to 172 (GALLEQFS). A helical transmembrane segment spans residues 173–190 (WHSAFLINVPFAIIAVVA). Residues 191-207 (GLFLLPESKLSKEKSHS) lie on the Cytoplasmic side of the membrane. Residues 208-225 (WDIPSTILSIAGMIGLVW) traverse the membrane as a helical segment. At 226-237 (SIKEFSKEGLAD) the chain is on the extracellular side. A helical membrane pass occupies residues 238–255 (IIPWVVIVLAITMIVIFV). At 256–278 (KRNLSSSDPMLDVRLFKKRSFSA) the chain is on the cytoplasmic side. The helical transmembrane segment at 279 to 295 (GTIAAFMTMFAMASVLL) threads the bilayer. Residues 296 to 315 (LASQWLQVVEELSPFKAGLY) lie on the Extracellular side of the membrane. A helical membrane pass occupies residues 316–333 (LLPMAIGDMVFAPIAPGL). Over 334–341 (AARFGPKI) the chain is Cytoplasmic. The helical transmembrane segment at 342–360 (VLPSGIGIAAIGMFIMYFF) threads the bilayer. At 361–369 (GHPLSYSTM) the chain is on the extracellular side. A helical transmembrane segment spans residues 370–387 (ALALILVGAGMASLAVAS). Residues 388-408 (ALIMLETPTSKAGNAAAVEES) lie on the Cytoplasmic side of the membrane. Residues 409–426 (MYDLGNVFGVAVLGSLSS) form a helical membrane-spanning segment. At 427–481 (MLYRVFLDISSFSSKGIVGDLAHVAEESVVGAVEVAKATGIKQLANEAVTSFNDA) the chain is on the extracellular side. Residues 482 to 499 (FVATALVGGIIMIIISIV) traverse the membrane as a helical segment. The Cytoplasmic portion of the chain corresponds to 500–514 (VYLLIPKSLDITKQK).

Belongs to the major facilitator superfamily.

The protein localises to the cell membrane. In terms of biological role, confers export-mediated resistance against antiseptic and disinfectant compounds such as intercalating dyes, quaternary ammonium salts and diamidines. This chain is Antiseptic resistance protein (qacA), found in Staphylococcus aureus (strain Mu50 / ATCC 700699).